Reading from the N-terminus, the 260-residue chain is Imidazole glycerol phosphate synthase subunit HisF (260 aa).

Residues D11 and D130 contribute to the active site.

This sequence belongs to the HisA/HisF family. In terms of assembly, heterodimer of HisH and HisF.

It is found in the cytoplasm. It catalyses the reaction 5-[(5-phospho-1-deoxy-D-ribulos-1-ylimino)methylamino]-1-(5-phospho-beta-D-ribosyl)imidazole-4-carboxamide + L-glutamine = D-erythro-1-(imidazol-4-yl)glycerol 3-phosphate + 5-amino-1-(5-phospho-beta-D-ribosyl)imidazole-4-carboxamide + L-glutamate + H(+). It participates in amino-acid biosynthesis; L-histidine biosynthesis; L-histidine from 5-phospho-alpha-D-ribose 1-diphosphate: step 5/9. In terms of biological role, IGPS catalyzes the conversion of PRFAR and glutamine to IGP, AICAR and glutamate. The HisF subunit catalyzes the cyclization activity that produces IGP and AICAR from PRFAR using the ammonia provided by the HisH subunit. This Psychrobacter arcticus (strain DSM 17307 / VKM B-2377 / 273-4) protein is Imidazole glycerol phosphate synthase subunit HisF.